A 206-amino-acid chain; its full sequence is MLGRLYLVVTPRPGWSLEATLDRTERALAGGVEVVQLRAKDWEARPTLALGERMLALARRYGVPFFLNDRPDLAALLGADGVHLGQNDLTPEEARRFFAGMVGRSTHAPEQALRALEEGVDYLSVGPVWETPTKPGRPAAGLAYVRWAAENLGEKPWYAIGGIDLGNLDQVLEAGARRIVVVRAILDAPDPERAARALRERLYGVA.

4-amino-2-methyl-5-(diphosphooxymethyl)pyrimidine is bound by residues 36-40 and Asn68; that span reads QLRAK. Mg(2+) contacts are provided by Asp69 and Asp88. Ser105 provides a ligand contact to 4-amino-2-methyl-5-(diphosphooxymethyl)pyrimidine. 2-[(2R,5Z)-2-carboxy-4-methylthiazol-5(2H)-ylidene]ethyl phosphate is bound at residue 131–133; it reads TPT. Residue Lys134 participates in 4-amino-2-methyl-5-(diphosphooxymethyl)pyrimidine binding. Residue Gly162 coordinates 2-[(2R,5Z)-2-carboxy-4-methylthiazol-5(2H)-ylidene]ethyl phosphate.

Belongs to the thiamine-phosphate synthase family. It depends on Mg(2+) as a cofactor.

The catalysed reaction is 2-[(2R,5Z)-2-carboxy-4-methylthiazol-5(2H)-ylidene]ethyl phosphate + 4-amino-2-methyl-5-(diphosphooxymethyl)pyrimidine + 2 H(+) = thiamine phosphate + CO2 + diphosphate. It carries out the reaction 2-(2-carboxy-4-methylthiazol-5-yl)ethyl phosphate + 4-amino-2-methyl-5-(diphosphooxymethyl)pyrimidine + 2 H(+) = thiamine phosphate + CO2 + diphosphate. It catalyses the reaction 4-methyl-5-(2-phosphooxyethyl)-thiazole + 4-amino-2-methyl-5-(diphosphooxymethyl)pyrimidine + H(+) = thiamine phosphate + diphosphate. The protein operates within cofactor biosynthesis; thiamine diphosphate biosynthesis; thiamine phosphate from 4-amino-2-methyl-5-diphosphomethylpyrimidine and 4-methyl-5-(2-phosphoethyl)-thiazole: step 1/1. Functionally, condenses 4-methyl-5-(beta-hydroxyethyl)thiazole monophosphate (THZ-P) and 2-methyl-4-amino-5-hydroxymethyl pyrimidine pyrophosphate (HMP-PP) to form thiamine monophosphate (TMP). The polypeptide is Thiamine-phosphate synthase (Thermus thermophilus (strain ATCC BAA-163 / DSM 7039 / HB27)).